The sequence spans 103 residues: MSGRGKGGKGLGKGGAKRHRKILRDNIQGITKPAIRRLARRGGVKRISGLIYEETRSVLKVFLENVIRDAVTYTEHAKRKTVTSLDVVYALKRQGRTLYGFGG.

An N6-acetyl-N6-methyllysine; alternate modification is found at K6. K6, K9, and K13 each carry N6-methyllysine; alternate. At K13 the chain carries N6-acetyl-N6-methyllysine; alternate. Residues 17–21 (KRHRK) mediate DNA binding. Residue K92 is modified to N6-glutaryllysine.

The protein belongs to the histone H4 family. The nucleosome is a histone octamer containing two molecules each of H2A, H2B, H3 and H4 assembled in one H3-H4 heterotetramer and two H2A-H2B heterodimers. The octamer wraps approximately 147 bp of DNA. Post-translationally, glutarylation at Lys-92 (H4K91glu) destabilizes nucleosomes by promoting dissociation of the H2A-H2B dimers from nucleosomes.

It is found in the nucleus. It localises to the chromosome. Core component of nucleosome. Nucleosomes wrap and compact DNA into chromatin, limiting DNA accessibility to the cellular machineries which require DNA as a template. Histones thereby play a central role in transcription regulation, DNA repair, DNA replication and chromosomal stability. DNA accessibility is regulated via a complex set of post-translational modifications of histones, also called histone code, and nucleosome remodeling. The chain is Histone H4 (H4.1) from Mortierella alpina (Oleaginous fungus).